Here is a 772-residue protein sequence, read N- to C-terminus: DnaJ homolog subfamily C member 16 (772 aa).

The signal sequence occupies residues 1–25; the sequence is MELKRLGVSWRFLMVLVLILQSLSA. Over 26–533 the chain is Cytoplasmic; the sequence is LDFDPYRVLG…ESLLHSNWRE (508 aa). One can recognise a J domain in the interval 29–93; sequence DPYRVLGVSR…EKRTNYDHYG (65 aa). The region spanning 119–245 is the Thioredoxin domain; that stretch reads FDESFFHFPF…LRQFVESLLP (127 aa). Residues 534–554 traverse the membrane as a helical; Anchor for type IV membrane protein segment; the sequence is MMPLLSLIFSALFILFGTVMV. The Extracellular segment spans residues 555–772; sequence QAFSDSNEER…FYIPSWPELD (218 aa). Positions 560–591 are disordered; the sequence is SNEERESHPADKEEVPEKAGKTEPSFTKESSS. Residues 561–580 show a composition bias toward basic and acidic residues; it reads NEERESHPADKEEVPEKAGK. N-linked (GlcNAc...) asparagine glycosylation occurs at Asn-629.

The protein resides in the endoplasmic reticulum membrane. In terms of biological role, plays an important role in regulating the size of autophagosomes during the formation process. The sequence is that of DnaJ homolog subfamily C member 16 (Dnajc16) from Mus musculus (Mouse).